We begin with the raw amino-acid sequence, 284 residues long: Pantothenate synthetase (284 aa).

30–37 serves as a coordination point for ATP; the sequence is MGNLHNAH. The active-site Proton donor is the histidine 37. Residue glutamine 61 coordinates (R)-pantoate. Glutamine 61 contributes to the beta-alanine binding site. An ATP-binding site is contributed by 149-152; the sequence is GIKD. Position 155 (glutamine 155) interacts with (R)-pantoate. ATP contacts are provided by residues valine 178 and 186-189; that span reads MSSR.

It belongs to the pantothenate synthetase family. Homodimer.

The protein localises to the cytoplasm. The catalysed reaction is (R)-pantoate + beta-alanine + ATP = (R)-pantothenate + AMP + diphosphate + H(+). It functions in the pathway cofactor biosynthesis; (R)-pantothenate biosynthesis; (R)-pantothenate from (R)-pantoate and beta-alanine: step 1/1. Functionally, catalyzes the condensation of pantoate with beta-alanine in an ATP-dependent reaction via a pantoyl-adenylate intermediate. The sequence is that of Pantothenate synthetase from Saccharophagus degradans (strain 2-40 / ATCC 43961 / DSM 17024).